The primary structure comprises 302 residues: Geranylgeranyl diphosphate synthase (302 aa).

Isopentenyl diphosphate contacts are provided by lysine 53, arginine 56, and histidine 87. Positions 94 and 100 each coordinate Mg(2+). Position 105 (arginine 105) interacts with (2E,6E)-farnesyl diphosphate. Arginine 106 contributes to the isopentenyl diphosphate binding site. (2E,6E)-farnesyl diphosphate is bound by residues lysine 189, threonine 190, and glutamine 227.

It belongs to the FPP/GGPP synthase family. Mg(2+) is required as a cofactor.

It carries out the reaction isopentenyl diphosphate + (2E,6E)-farnesyl diphosphate = (2E,6E,10E)-geranylgeranyl diphosphate + diphosphate. The protein operates within isoprenoid biosynthesis; geranylgeranyl diphosphate biosynthesis; geranylgeranyl diphosphate from farnesyl diphosphate and isopentenyl diphosphate: step 1/1. In terms of biological role, catalyzes the condensation of farnesyl diphosphate (FPP) and isopentenyl diphosphate (IPP) to yield geranylgeranyl diphosphate (GGPP) needed for biosynthesis of carotenoids and diterpenes. This is Geranylgeranyl diphosphate synthase (crtE) from Pantoea ananas (Erwinia uredovora).